We begin with the raw amino-acid sequence, 49 residues long: Astexin-2 (49 aa).

A propeptide spanning residues 1–25 (MTKRTTIAARRVGLIDLGKATRQTK) is cleaved from the precursor. Positions 26–34 (GLTQIQALD) form a cross-link, isoaspartyl glycine isopeptide (Gly-Asp).

This lasso peptide is hydrolyzed to a linear form by the isopeptidase AtxE2, in vitro. The isopeptidase AtxE2 only recognizes the threaded form (but not the unthreaded form).

It is found in the cytoplasm. It localises to the secreted. Its function is as follows. Shows weak antimicrobial activity against its phylogenetic relative Caulobacter crescentus. Does not show activity against other bacteria tested (E.coli, Vibrio sp, Burkhoderia thailandensis, and Salmonella newport). This chain is Astexin-2, found in Asticcacaulis excentricus (strain ATCC 15261 / DSM 4724 / KCTC 12464 / NCIMB 9791 / VKM B-1370 / CB 48).